An 87-amino-acid chain; its full sequence is MVNMKASMFLTFAGLVLLFVVCHASESEEKEFPKEMLSSIFAVDDDFKQEERDCAGYMRECKEKLCCSGYVCSSRWKWCVLSAPWRR.

The signal sequence occupies residues 1-24 (MVNMKASMFLTFAGLVLLFVVCHA). The propeptide occupies 25–52 (SESEEKEFPKEMLSSIFAVDDDFKQEER). Cystine bridges form between Cys54–Cys67, Cys61–Cys72, and Cys66–Cys79.

The protein belongs to the neurotoxin 10 (Hwtx-1) family. 51 (Hntx-8) subfamily. Hntx-8 sub-subfamily. As to expression, expressed by the venom gland.

It localises to the secreted. Ion channel inhibitor. This chain is U3-theraphotoxin-Hhn1c, found in Cyriopagopus hainanus (Chinese bird spider).